The sequence spans 319 residues: Molybdenum cofactor biosynthesis bifunctional protein (319 aa).

The interval 1 to 145 (MIDVGDKAVT…GKSGHWQRPA (145 aa)) is molybdenum cofactor biosynthesis protein C. Residues 61–63 (LCH) and 99–100 (ME) each bind substrate. Asp114 is an active-site residue. Residues 146–319 (IAPDVAPTGA…KGADHGTVKG (174 aa)) form a molybdenum cofactor biosynthesis protein B region.

In the N-terminal section; belongs to the MoaC family. It in the C-terminal section; belongs to the MoaB/Mog family.

It catalyses the reaction (8S)-3',8-cyclo-7,8-dihydroguanosine 5'-triphosphate = cyclic pyranopterin phosphate + diphosphate. It participates in cofactor biosynthesis; molybdopterin biosynthesis. Functionally, catalyzes the conversion of (8S)-3',8-cyclo-7,8-dihydroguanosine 5'-triphosphate to cyclic pyranopterin monophosphate (cPMP). This chain is Molybdenum cofactor biosynthesis bifunctional protein (moaCB), found in Synechococcus elongatus (strain ATCC 33912 / PCC 7942 / FACHB-805) (Anacystis nidulans R2).